A 118-amino-acid polypeptide reads, in one-letter code: UPF0344 protein Aflv_2205 (118 aa).

The next 4 membrane-spanning stretches (helical) occupy residues 4-24 (AHIT…ALQA), 32-52 (MLHM…AWIL), 60-80 (FLYI…EMIL), and 96-116 (FIVA…GFSF).

It belongs to the UPF0344 family.

Its subcellular location is the cell membrane. In Anoxybacillus flavithermus (strain DSM 21510 / WK1), this protein is UPF0344 protein Aflv_2205.